The following is a 301-amino-acid chain: Tyrosine recombinase XerC (301 aa).

The 89-residue stretch at 1–89 (MGLDGLAAYL…SWRQYCVWLV (89 aa)) folds into the Core-binding (CB) domain. Positions 110–290 (RVPKALPQEW…DFDHIARLYD (181 aa)) constitute a Tyr recombinase domain. Catalysis depends on residues Arg151, Lys175, His242, Arg245, and His268. The O-(3'-phospho-DNA)-tyrosine intermediate role is filled by Tyr277.

This sequence belongs to the 'phage' integrase family. XerC subfamily. In terms of assembly, forms a cyclic heterotetrameric complex composed of two molecules of XerC and two molecules of XerD.

The protein localises to the cytoplasm. Its function is as follows. Site-specific tyrosine recombinase, which acts by catalyzing the cutting and rejoining of the recombining DNA molecules. The XerC-XerD complex is essential to convert dimers of the bacterial chromosome into monomers to permit their segregation at cell division. It also contributes to the segregational stability of plasmids. The polypeptide is Tyrosine recombinase XerC (Neisseria meningitidis serogroup B (strain ATCC BAA-335 / MC58)).